The following is a 271-amino-acid chain: 3-methyl-2-oxobutanoate hydroxymethyltransferase (271 aa).

2 residues coordinate Mg(2+): aspartate 53 and aspartate 92. 3-methyl-2-oxobutanoate is bound by residues 53–54, aspartate 92, and lysine 120; that span reads DS. Position 122 (glutamate 122) interacts with Mg(2+). The active-site Proton acceptor is the glutamate 189.

The protein belongs to the PanB family. As to quaternary structure, homodecamer; pentamer of dimers. Requires Mg(2+) as cofactor.

It localises to the cytoplasm. It carries out the reaction 3-methyl-2-oxobutanoate + (6R)-5,10-methylene-5,6,7,8-tetrahydrofolate + H2O = 2-dehydropantoate + (6S)-5,6,7,8-tetrahydrofolate. It functions in the pathway cofactor biosynthesis; (R)-pantothenate biosynthesis; (R)-pantoate from 3-methyl-2-oxobutanoate: step 1/2. Functionally, catalyzes the reversible reaction in which hydroxymethyl group from 5,10-methylenetetrahydrofolate is transferred onto alpha-ketoisovalerate to form ketopantoate. This chain is 3-methyl-2-oxobutanoate hydroxymethyltransferase, found in Burkholderia vietnamiensis (strain G4 / LMG 22486) (Burkholderia cepacia (strain R1808)).